We begin with the raw amino-acid sequence, 287 residues long: ATP synthase gamma chain (287 aa).

Belongs to the ATPase gamma chain family. F-type ATPases have 2 components, CF(1) - the catalytic core - and CF(0) - the membrane proton channel. CF(1) has five subunits: alpha(3), beta(3), gamma(1), delta(1), epsilon(1). CF(0) has three main subunits: a, b and c.

It is found in the cell inner membrane. Its function is as follows. Produces ATP from ADP in the presence of a proton gradient across the membrane. The gamma chain is believed to be important in regulating ATPase activity and the flow of protons through the CF(0) complex. The polypeptide is ATP synthase gamma chain (Baumannia cicadellinicola subsp. Homalodisca coagulata).